We begin with the raw amino-acid sequence, 416 residues long: Serine hydroxymethyltransferase (416 aa).

(6S)-5,6,7,8-tetrahydrofolate-binding positions include Leu118 and 122–124 (GHL). Lys226 carries the N6-(pyridoxal phosphate)lysine modification. Glu242 contributes to the (6S)-5,6,7,8-tetrahydrofolate binding site.

The protein belongs to the SHMT family. Homodimer. The cofactor is pyridoxal 5'-phosphate.

Its subcellular location is the cytoplasm. It catalyses the reaction (6R)-5,10-methylene-5,6,7,8-tetrahydrofolate + glycine + H2O = (6S)-5,6,7,8-tetrahydrofolate + L-serine. Its pathway is one-carbon metabolism; tetrahydrofolate interconversion. It participates in amino-acid biosynthesis; glycine biosynthesis; glycine from L-serine: step 1/1. Its function is as follows. Catalyzes the reversible interconversion of serine and glycine with tetrahydrofolate (THF) serving as the one-carbon carrier. This reaction serves as the major source of one-carbon groups required for the biosynthesis of purines, thymidylate, methionine, and other important biomolecules. Also exhibits THF-independent aldolase activity toward beta-hydroxyamino acids, producing glycine and aldehydes, via a retro-aldol mechanism. This chain is Serine hydroxymethyltransferase, found in Helicobacter pylori (strain HPAG1).